We begin with the raw amino-acid sequence, 149 residues long: D-aminoacyl-tRNA deacylase (149 aa).

The short motif at 141-142 (GP) is the Gly-cisPro motif, important for rejection of L-amino acids element.

It belongs to the DTD family. In terms of assembly, homodimer.

It is found in the cytoplasm. It catalyses the reaction glycyl-tRNA(Ala) + H2O = tRNA(Ala) + glycine + H(+). The enzyme catalyses a D-aminoacyl-tRNA + H2O = a tRNA + a D-alpha-amino acid + H(+). Functionally, an aminoacyl-tRNA editing enzyme that deacylates mischarged D-aminoacyl-tRNAs. Also deacylates mischarged glycyl-tRNA(Ala), protecting cells against glycine mischarging by AlaRS. Acts via tRNA-based rather than protein-based catalysis; rejects L-amino acids rather than detecting D-amino acids in the active site. By recycling D-aminoacyl-tRNA to D-amino acids and free tRNA molecules, this enzyme counteracts the toxicity associated with the formation of D-aminoacyl-tRNA entities in vivo and helps enforce protein L-homochirality. The sequence is that of D-aminoacyl-tRNA deacylase from Hydrogenovibrio crunogenus (strain DSM 25203 / XCL-2) (Thiomicrospira crunogena).